The sequence spans 442 residues: Kelch domain-containing protein 10 (442 aa).

The interval 1–58 is disordered; the sequence is MSAAQGWDRNRRRGGGAAGGGGGGSGAGGGSGGNGGRGTGQLNRFVQLSGRPHLPGKK. The residue at position 13 (arginine 13) is an Omega-N-methylarginine. Residues 15 to 39 are compositionally biased toward gly residues; it reads GGAAGGGGGGSGAGGGSGGNGGRGT. Kelch repeat units lie at residues 87–154, 155–198, 199–260, 261–319, 320–364, and 365–403; these read RPPP…PREL, ASMS…ALLS, CRGK…PEER, YRHE…RRCH, SCVQ…PEPV, and YFHCAAVTPAGCMYIHGGVVNIHENKRTGSLFKIWLVVP. Residues 401-442 are interaction with CUL2; it reads VVPSLLELAWEKLLAAFPNLANLSRTQLLHLGLTQGLIERLK.

Belongs to the KLHDC10 family. As to quaternary structure, component of a CRL2 E3 ubiquitin-protein ligase complex, also named ECS (Elongin BC-CUL2/5-SOCS-box protein) complex, composed of CUL2, Elongin BC (ELOB and ELOC), RBX1 and substrate-specific adapter KLHDC10. Interacts (via the 6 Kelch repeats) with PPP5C.

It is found in the nucleus. The protein resides in the cytoplasm. It participates in protein modification; protein ubiquitination. Substrate-recognition component of a Cul2-RING (CRL2) E3 ubiquitin-protein ligase complex of the DesCEND (destruction via C-end degrons) pathway, which recognizes a C-degron located at the extreme C-terminus of target proteins, leading to their ubiquitination and degradation. The C-degron recognized by the DesCEND pathway is usually a motif of less than ten residues and can be present in full-length proteins, truncated proteins or proteolytically cleaved forms. The CRL2(KLHDC10) complex specifically recognizes proteins with a proline-glycine (Pro-Gly) or an alanine tail (CAT tail) at the C-terminus, leading to their ubiquitination and degradation. The CRL2(KLHDC10) complex is involved in the ribosome-associated quality control (RQC) pathway, which mediates the extraction of incompletely synthesized nascent chains from stalled ribosomes: CRL2(KLHDC10) acts downstream of NEMF and recognizes CAT tails associated with stalled nascent chains, leading to their ubiquitination and degradation. Participates in the oxidative stress-induced cell death through MAP3K5 activation. Inhibits PPP5C phosphatase activity on MAP3K5. Acts as a regulator of necroptosis. This chain is Kelch domain-containing protein 10 (KLHDC10), found in Bos taurus (Bovine).